The chain runs to 421 residues: D-amino acid dehydrogenase (421 aa).

3 to 17 is an FAD binding site; it reads VLVLGGGVVGVASAY.

It belongs to the DadA oxidoreductase family. It depends on FAD as a cofactor.

The catalysed reaction is a D-alpha-amino acid + A + H2O = a 2-oxocarboxylate + AH2 + NH4(+). Its pathway is amino-acid degradation; D-alanine degradation; NH(3) and pyruvate from D-alanine: step 1/1. Its function is as follows. Oxidative deamination of D-amino acids. The protein is D-amino acid dehydrogenase of Methylobacterium nodulans (strain LMG 21967 / CNCM I-2342 / ORS 2060).